The following is a 106-amino-acid chain: Large ribosomal subunit protein bL21 (106 aa).

This sequence belongs to the bacterial ribosomal protein bL21 family. Part of the 50S ribosomal subunit. Contacts protein L20.

Functionally, this protein binds to 23S rRNA in the presence of protein L20. The protein is Large ribosomal subunit protein bL21 of Chlamydia pneumoniae (Chlamydophila pneumoniae).